A 234-amino-acid polypeptide reads, in one-letter code: Large ribosomal subunit protein uL1 (234 aa).

The protein belongs to the universal ribosomal protein uL1 family. Part of the 50S ribosomal subunit.

In terms of biological role, binds directly to 23S rRNA. The L1 stalk is quite mobile in the ribosome, and is involved in E site tRNA release. Its function is as follows. Protein L1 is also a translational repressor protein, it controls the translation of the L11 operon by binding to its mRNA. This chain is Large ribosomal subunit protein uL1, found in Tolumonas auensis (strain DSM 9187 / NBRC 110442 / TA 4).